Reading from the N-terminus, the 105-residue chain is Flowering-promoting factor 1-like protein 5 (105 aa).

This sequence belongs to the FPF1 family.

The chain is Flowering-promoting factor 1-like protein 5 from Oryza sativa subsp. japonica (Rice).